We begin with the raw amino-acid sequence, 314 residues long: 2,3-dihydroxyphenylpropionate/2,3-dihydroxicinnamic acid 1,2-dioxygenase (314 aa).

H115 serves as the catalytic Proton donor. H179 acts as the Proton acceptor in catalysis.

The protein belongs to the LigB/MhpB extradiol dioxygenase family. In terms of assembly, homotetramer. The cofactor is Fe(2+).

The catalysed reaction is 3-(2,3-dihydroxyphenyl)propanoate + O2 = (2Z,4E)-2-hydroxy-6-oxonona-2,4-dienedioate + H(+). It catalyses the reaction (2E)-3-(2,3-dihydroxyphenyl)prop-2-enoate + O2 = (2Z,4E,7E)-2-hydroxy-6-oxonona-2,4,7-trienedioate + H(+). Its pathway is aromatic compound metabolism; 3-phenylpropanoate degradation. Catalyzes the non-heme iron(II)-dependent oxidative cleavage of 2,3-dihydroxyphenylpropionic acid and 2,3-dihydroxicinnamic acid into 2-hydroxy-6-ketononadienedioate and 2-hydroxy-6-ketononatrienedioate, respectively. This is 2,3-dihydroxyphenylpropionate/2,3-dihydroxicinnamic acid 1,2-dioxygenase from Rhodococcus globerulus.